The sequence spans 92 residues: Small ribosomal subunit protein uS19 (92 aa).

Belongs to the universal ribosomal protein uS19 family.

Its function is as follows. Protein S19 forms a complex with S13 that binds strongly to the 16S ribosomal RNA. This Beijerinckia indica subsp. indica (strain ATCC 9039 / DSM 1715 / NCIMB 8712) protein is Small ribosomal subunit protein uS19.